The primary structure comprises 233 residues: RNA/RNP complex-1-interacting phosphatase homolog (233 aa).

A compositionally biased stretch (basic residues) spans methionine 1 to proline 14. The interval methionine 1–proline 21 is disordered. A Tyrosine-protein phosphatase domain is found at asparagine 34–tyrosine 206. The active-site Phosphocysteine intermediate is cysteine 150. Threonine 151–arginine 156 is a substrate binding site. Catalysis depends on arginine 156, which acts as the Proton donor/acceptor. The disordered stretch occupies residues lysine 204–glutamine 233. Positions lysine 208–serine 217 are enriched in low complexity. Positions alanine 218–glutamine 233 are enriched in polar residues.

The protein belongs to the protein-tyrosine phosphatase family. Non-receptor class dual specificity subfamily. In terms of assembly, interacts with the ERI/DICER complex component dcr-1. Interacts with ERI/DICER complex components rrf-3 and isoform b of eri-1. Interacts with drh-3 and rde-8.

The protein resides in the cytoplasm. It is found in the nucleus. RNA polyphosphatase which has RNA 5'-triphosphatase and diphosphatase activities. Displays poor protein-tyrosine phosphatase activity. Binds to 5'-triphosphorylated RNAs (also called ppp-RNAs). Dephosphorylates ppp-RNAs converting them to 5'-monophosphorylated RNAs (also called p-RNAs). During small-RNA-mediated gene-silencing or RNA interference (RNAi), involved in the dcr-1-mediated processing of an amplified dsRNA intermediate. This is most likely in association with several components of the ERI/DICER complex including dcr-1, eri-1 and rrf-3. Plays a role in the biogenesis of 26G small interfering RNAs (26G-siRNAs), which are a class of 26 nucleotide siRNAs that possess a guanine residue at the 5'-end, by dephosphorylating 5'-triphosphorylated 26G-siRNAs prior to their maturation by the ERI/DICER complex. Plays a role in the biogenesis of csr-1-bound 22G small interfering RNAs (22G-siRNAs), which are a class of 22 nucleotide siRNAs that possess a guanine residue at the 5'-end. Not required for the biogenesis of microRNAs (miRNA) or for the biogenesis of a class of 21 nucleotide PIWI-interacting RNAs (piRNAs) that possess a uracil residue at the 5'-end (also called 21U-RNAs). The protein is RNA/RNP complex-1-interacting phosphatase homolog of Caenorhabditis elegans.